Reading from the N-terminus, the 109-residue chain is Glutaredoxin 4 (109 aa).

In terms of domain architecture, Glutaredoxin spans 4-106 (LDKIKKQISE…TLLADVAAKY (103 aa)). Lys21 is a glutathione binding site. Cys29 serves as a coordination point for [2Fe-2S] cluster. Glutathione-binding positions include Arg58, Phe70, and 83 to 84 (CD).

This sequence belongs to the glutaredoxin family. Monothiol subfamily. As to quaternary structure, homodimer.

It localises to the cytoplasm. Its function is as follows. Monothiol glutaredoxin involved in the biogenesis of iron-sulfur clusters. This is Glutaredoxin 4 (grxD) from Pasteurella multocida (strain Pm70).